The primary structure comprises 205 residues: Pyridoxal 5'-phosphate synthase subunit PdxT (205 aa).

52–54 provides a ligand contact to L-glutamine; that stretch reads GES. C84 acts as the Nucleophile in catalysis. L-glutamine contacts are provided by residues R116 and 145-146; that span reads IR. Residues H185 and E187 each act as charge relay system in the active site.

It belongs to the glutaminase PdxT/SNO family. In terms of assembly, in the presence of PdxS, forms a dodecamer of heterodimers. Only shows activity in the heterodimer.

It carries out the reaction aldehydo-D-ribose 5-phosphate + D-glyceraldehyde 3-phosphate + L-glutamine = pyridoxal 5'-phosphate + L-glutamate + phosphate + 3 H2O + H(+). It catalyses the reaction L-glutamine + H2O = L-glutamate + NH4(+). It participates in cofactor biosynthesis; pyridoxal 5'-phosphate biosynthesis. In terms of biological role, catalyzes the hydrolysis of glutamine to glutamate and ammonia as part of the biosynthesis of pyridoxal 5'-phosphate. The resulting ammonia molecule is channeled to the active site of PdxS. The chain is Pyridoxal 5'-phosphate synthase subunit PdxT from Staphylothermus marinus (strain ATCC 43588 / DSM 3639 / JCM 9404 / F1).